Reading from the N-terminus, the 242-residue chain is MSQPGKVKGQQAFVLHAQPYKETSLLVEMFTREHGRVGLVARGARRPRAGIRALLLPFSPLEVGWFGKSDIRTLSDIDWQGGLPQLAGTPLVTGFYVNELIMKLVARDDPHEGLFDDYRTLIAHLARGSVAIAPVLRRFELQLLAATGYAPTLDRDLAGEPVRADAVYGFVPGEGARPGAERGCEVSGQTLLALDHGALDQASAAVLREARFLNRALLTHALAGTELASRALLNEVAALSDN.

Belongs to the RecO family.

In terms of biological role, involved in DNA repair and RecF pathway recombination. In Laribacter hongkongensis (strain HLHK9), this protein is DNA repair protein RecO.